The chain runs to 418 residues: UDP-N-acetylglucosamine 1-carboxyvinyltransferase (418 aa).

23–24 (KN) contacts phosphoenolpyruvate. Position 93 (R93) interacts with UDP-N-acetyl-alpha-D-glucosamine. Residue D117 is the Proton donor of the active site. UDP-N-acetyl-alpha-D-glucosamine contacts are provided by D305 and V327.

The protein belongs to the EPSP synthase family. MurA subfamily.

The protein resides in the cytoplasm. It catalyses the reaction phosphoenolpyruvate + UDP-N-acetyl-alpha-D-glucosamine = UDP-N-acetyl-3-O-(1-carboxyvinyl)-alpha-D-glucosamine + phosphate. Its pathway is cell wall biogenesis; peptidoglycan biosynthesis. Functionally, cell wall formation. Adds enolpyruvyl to UDP-N-acetylglucosamine. In Mycobacterium bovis (strain ATCC BAA-935 / AF2122/97), this protein is UDP-N-acetylglucosamine 1-carboxyvinyltransferase.